The chain runs to 513 residues: Zinc finger CCCH-type with G patch domain-containing protein (513 aa).

Residues 155 to 178 (PCSYYLEGECRFDEAKCRFSHGAL) form a C3H1-type zinc finger. Acidic residues-rich tracts occupy residues 252 to 261 (DQDEDDELSS) and 273 to 283 (SDEAESDMDDL). The interval 252–283 (DQDEDDELSSEESTSSMRDASSDEAESDMDDL) is disordered. The G-patch domain occupies 312–358 (TRGIGSKLMEKMGYIHGTGLGSDGRGIVTPVSAQILPQGRSLDACME). A compositionally biased stretch (polar residues) spans 477-495 (QVQMQSHKQELATLQAQER). Residues 477–513 (QVQMQSHKQELATLQAQERSLSKEQQTRKSKNKMFEF) are disordered. The span at 496 to 513 (SLSKEQQTRKSKNKMFEF) shows a compositional bias: basic and acidic residues.

Its subcellular location is the nucleus. In terms of biological role, transcription repressor. This Drosophila simulans (Fruit fly) protein is Zinc finger CCCH-type with G patch domain-containing protein.